Reading from the N-terminus, the 274-residue chain is Acyl-[acyl-carrier-protein]--UDP-N-acetylglucosamine O-acyltransferase (274 aa).

The protein belongs to the transferase hexapeptide repeat family. LpxA subfamily. Homotrimer.

The protein localises to the cytoplasm. It catalyses the reaction a (3R)-hydroxyacyl-[ACP] + UDP-N-acetyl-alpha-D-glucosamine = a UDP-3-O-[(3R)-3-hydroxyacyl]-N-acetyl-alpha-D-glucosamine + holo-[ACP]. It participates in glycolipid biosynthesis; lipid IV(A) biosynthesis; lipid IV(A) from (3R)-3-hydroxytetradecanoyl-[acyl-carrier-protein] and UDP-N-acetyl-alpha-D-glucosamine: step 1/6. Its function is as follows. Involved in the biosynthesis of lipid A, a phosphorylated glycolipid that anchors the lipopolysaccharide to the outer membrane of the cell. This is Acyl-[acyl-carrier-protein]--UDP-N-acetylglucosamine O-acyltransferase from Bartonella henselae (strain ATCC 49882 / DSM 28221 / CCUG 30454 / Houston 1) (Rochalimaea henselae).